The following is a 428-amino-acid chain: Glial fibrillary acidic protein (428 aa).

The segment at 1–68 (MERRRVTSAT…KETRASERAE (68 aa)) is head. Threonine 7 is modified (phosphothreonine; by AURKB and ROCK1). Arginine 12 carries the omega-N-methylarginine modification. Phosphoserine; by AURKB and ROCK1 is present on serine 13. Residues arginine 26 and arginine 32 each carry the citrulline modification. A Phosphoserine; by AURKB and ROCK1 modification is found at serine 34. The region spanning 65 to 373 (ERAEMMELND…KLLEGEENRI (309 aa)) is the IF rod domain. The segment at 69 to 100 (MMELNDRFASYIEKVRFLEQQNKALAAELNQL) is coil 1A. Serine 78 bears the Phosphoserine mark. The interval 101–111 (RAKEPTKLADV) is linker 1. A phosphothreonine mark is found at threonine 106 and threonine 146. A coil 1B region spans residues 112–210 (YQAELRELRL…EEEVRELQEQ (99 aa)). Residues 211-226 (LAQQQVHVEMDVAKPD) are linker 12. The interval 227–248 (LTAALREIRTQYEAVASSNMHE) is coil 2A. The tract at residues 249 to 252 (AEEW) is linker 2. Residues 253–373 (YRSKFADLND…KLLEGEENRI (121 aa)) form a coil 2B region. A Citrulline modification is found at arginine 266. Serine 319 is subject to Phosphoserine. The interval 374 to 428 (TIPVQTFSNLQIRETSLDTKSVSEGHLKRNIVVKTVEMRDGEVIKESKQEHKDVM) is tail. Threonine 379 is subject to Phosphothreonine. The residue at position 381 (serine 381) is a Phosphoserine. Arginine 402 and arginine 412 each carry citrulline.

Belongs to the intermediate filament family. In terms of assembly, interacts with SYNM. In terms of processing, phosphorylated by PKN1.

Its subcellular location is the cytoplasm. Functionally, GFAP, a class-III intermediate filament, is a cell-specific marker that, during the development of the central nervous system, distinguishes astrocytes from other glial cells. The polypeptide is Glial fibrillary acidic protein (GFAP) (Bos taurus (Bovine)).